A 204-amino-acid chain; its full sequence is MIFKNLISLFFIGLATAIRFNLTDLECSRLRGPHCGTYLLKVVGTNATYVGEKSFIGLDALTESKGEFFQRMLEQEPRLIPRLFTIAENDTANFTPLTFTTYLKTCNPQSIENAMIPFVNTVTSEISFDAWAYTAQNSSRITGLSNQLMNSTLYNVQVATCTPGFSALLLDSPTINVFNNEEGMPSWCQPIELIPVCPLDEGFN.

The signal sequence occupies residues 1–17 (MIFKNLISLFFIGLATA).

Belongs to the VEL1 family.

The protein resides in the cytoplasm. It localises to the cytosol. This is VEL1-related protein AC977.05c from Schizosaccharomyces pombe (strain 972 / ATCC 24843) (Fission yeast).